We begin with the raw amino-acid sequence, 204 residues long: Peptide deformylase (204 aa).

Fe cation-binding residues include C131 and H174. E175 is an active-site residue. H178 is a Fe cation binding site.

This sequence belongs to the polypeptide deformylase family. The cofactor is Fe(2+).

The catalysed reaction is N-terminal N-formyl-L-methionyl-[peptide] + H2O = N-terminal L-methionyl-[peptide] + formate. Its function is as follows. Removes the formyl group from the N-terminal Met of newly synthesized proteins. Requires at least a dipeptide for an efficient rate of reaction. N-terminal L-methionine is a prerequisite for activity but the enzyme has broad specificity at other positions. This chain is Peptide deformylase, found in Streptococcus mutans serotype c (strain ATCC 700610 / UA159).